A 284-amino-acid chain; its full sequence is Rhomboid-type serine protease 2 (284 aa).

The next 6 helical transmembrane spans lie at 17-37, 66-86, 98-118, 124-141, 160-180, and 182-202; these read PPALTTGLIVFTFMLCVIKSV, FHVNFFHWICNIFTLATPLAV, VTLNLLTVIAALQYCIVGLIF, VIGLSGIAFSLMSYMAYH, IKLYTLYVPFVVAIVFMILFP, and SSLPGHLFGITTGYLLSYGYI. The active-site Nucleophile is the serine 128. Histidine 187 is an active-site residue.

It belongs to the peptidase S54 family.

The protein resides in the golgi apparatus membrane. It localises to the golgi apparatus. Its subcellular location is the cis-Golgi network membrane. The enzyme catalyses Cleaves type-1 transmembrane domains using a catalytic dyad composed of serine and histidine that are contributed by different transmembrane domains.. Probable rhomboid-type serine protease that catalyzes intramembrane proteolysis. This Candida albicans (strain SC5314 / ATCC MYA-2876) (Yeast) protein is Rhomboid-type serine protease 2 (RBD2).